Consider the following 278-residue polypeptide: MRSIWGLIVLVAAATFYLYLLSAFLPPGPRAIRVHDTGPEHTDDEPEEKVLRLKFPSDLEELRELAELLKFYKTEHTGYVFILFCSAYLYKQSFAIPGSSFLNMLSGALFGPLHGLIIACTLTTVGSTNCYLLSRTFGKRHIVRLFPEKVAMLQRMVEENRSSLFFFLLFLRFFPMTPNWFLNVTSPILNIPIPIFFFSILIGLIPYNFICVHTGAVLSEINSLDDIFSWFTLLQLLLIACVALLPGALIRRYSKDHLKLHGLEPNGHQKILNDRKTR.

The signal sequence occupies residues 1–23; that stretch reads MRSIWGLIVLVAAATFYLYLLSA. 5 helical membrane passes run 78 to 98, 101 to 121, 164 to 184, 191 to 211, and 230 to 250; these read GYVFILFCSAYLYKQSFAIPG, FLNMLSGALFGPLHGLIIACT, LFFFLLFLRFFPMTPNWFLNV, IPIPIFFFSILIGLIPYNFIC, and WFTLLQLLLIACVALLPGALI.

This sequence belongs to the TMEM41 family.

It localises to the membrane. The polypeptide is Transmembrane protein 41A-B (Danio rerio (Zebrafish)).